The primary structure comprises 70 residues: ATP synthase subunit c (70 aa).

The next 2 helical transmembrane spans lie at 3 to 23 (ALAA…IGIA) and 44 to 64 (LFLI…VIAF).

Belongs to the ATPase C chain family. F-type ATPases have 2 components, F(1) - the catalytic core - and F(0) - the membrane proton channel. F(1) has five subunits: alpha(3), beta(3), gamma(1), delta(1), epsilon(1). F(0) has three main subunits: a(1), b(2) and c(10-14). The alpha and beta chains form an alternating ring which encloses part of the gamma chain. F(1) is attached to F(0) by a central stalk formed by the gamma and epsilon chains, while a peripheral stalk is formed by the delta and b chains.

The protein localises to the cell membrane. F(1)F(0) ATP synthase produces ATP from ADP in the presence of a proton or sodium gradient. F-type ATPases consist of two structural domains, F(1) containing the extramembraneous catalytic core and F(0) containing the membrane proton channel, linked together by a central stalk and a peripheral stalk. During catalysis, ATP synthesis in the catalytic domain of F(1) is coupled via a rotary mechanism of the central stalk subunits to proton translocation. Its function is as follows. Key component of the F(0) channel; it plays a direct role in translocation across the membrane. A homomeric c-ring of between 10-14 subunits forms the central stalk rotor element with the F(1) delta and epsilon subunits. The polypeptide is ATP synthase subunit c (Caldicellulosiruptor bescii (strain ATCC BAA-1888 / DSM 6725 / KCTC 15123 / Z-1320) (Anaerocellum thermophilum)).